Reading from the N-terminus, the 358-residue chain is Vesicular integral-membrane protein VIP36 (358 aa).

The signal sequence occupies residues 1-46; the sequence is MAAEAWLWRWGWGWGQRCPGRPGLPGPGPSPTTFLHLLLLLGPVAA. The Lumenal portion of the chain corresponds to 47-324; sequence DITDGNSEHL…FRNGPLTGWR (278 aa). The L-type lectin-like domain maps to 54–278; that stretch reads EHLKREHSLI…DIISIKLFQL (225 aa). A carbohydrate-binding residues include Ser-98 and Asp-133. Ca(2+)-binding residues include Asp-164, Tyr-166, and Asn-168. An a carbohydrate-binding site is contributed by 166–168; that stretch reads YPN. Asn-185 carries N-linked (GlcNAc...) asparagine glycosylation. Position 192 (His-192) interacts with a carbohydrate. Asp-195 contributes to the Ca(2+) binding site. Cys-204 and Cys-241 are joined by a disulfide. 262–264 contributes to the a carbohydrate binding site; it reads GDL. The helical transmembrane segment at 325–347 threads the bilayer; sequence VFLLLLCALLGVVVCAVVGAVVF. Residues 348–358 lie on the Cytoplasmic side of the membrane; it reads QKRQERNKRFY.

Requires Ca(2+) as cofactor.

Its subcellular location is the golgi apparatus membrane. Its function is as follows. Plays a role as an intracellular lectin in the early secretory pathway. Interacts with N-acetyl-D-galactosamine and high-mannose type glycans and may also bind to O-linked glycans. Involved in the transport and sorting of glycoproteins carrying high mannose-type glycans. The polypeptide is Vesicular integral-membrane protein VIP36 (Lman2) (Mus musculus (Mouse)).